A 361-amino-acid chain; its full sequence is Histidinol-phosphate aminotransferase (361 aa).

At Lys219 the chain carries N6-(pyridoxal phosphate)lysine.

It belongs to the class-II pyridoxal-phosphate-dependent aminotransferase family. Histidinol-phosphate aminotransferase subfamily. As to quaternary structure, homodimer. Pyridoxal 5'-phosphate serves as cofactor.

It catalyses the reaction L-histidinol phosphate + 2-oxoglutarate = 3-(imidazol-4-yl)-2-oxopropyl phosphate + L-glutamate. The protein operates within amino-acid biosynthesis; L-histidine biosynthesis; L-histidine from 5-phospho-alpha-D-ribose 1-diphosphate: step 7/9. This chain is Histidinol-phosphate aminotransferase, found in Acinetobacter baumannii (strain SDF).